The primary structure comprises 548 residues: Natural resistance-associated macrophage protein 1 (548 aa).

Positions 1–38 (MPGDMGPPKQGGTRYGSISSPPSPGPQQAPPGGTYLSE) are disordered. The Cytoplasmic segment spans residues 1–55 (MPGDMGPPKQGGTRYGSISSPPSPGPQQAPPGGTYLSEKIPIPDTESGAFSLRKL). The helical transmembrane segment at 56 to 73 (WAFTGPGFLMSIAFLDPG) threads the bilayer. At 74 to 82 (NIESDLQAG) the chain is on the extracellular side. A helical membrane pass occupies residues 83-102 (AVAGFKLLWVLLWATVLGLL). Residues 103 to 139 (CQRLAARLGVVTGKDLGEVCHLYYPKVPRILLWLTIE) are Cytoplasmic-facing. The helical transmembrane segment at 140–160 (LAIVGSDMQEVIGTAIAFSLL) threads the bilayer. Residues 161-164 (SAGR) lie on the Extracellular side of the membrane. The chain crosses the membrane as a helical span at residues 165 to 184 (IPLWGGVLITIVDTFFFLFL). The Cytoplasmic segment spans residues 185–193 (DNYGLRKLE). Residues 194 to 214 (AFFGFLITIMALTFGYEYVVA) traverse the membrane as a helical segment. The Extracellular segment spans residues 215–237 (RPAQGALLQGLFLPSCAGCGQPE). A helical membrane pass occupies residues 238–256 (LLQAVGIVGAIIMPHNIYL). The Cytoplasmic segment spans residues 257 to 284 (HSSLVKSREVDRSRRADIREANMYFLIE). Residues 285–304 (ATIALSVSFLINLFVMAVFG) form a helical membrane-spanning segment. At 305-346 (QAFYKQTNQAAFNICANSSLHDYATIFPRNNLTVAVDIYQGG) the chain is on the extracellular side. Asparagine 321 and asparagine 335 each carry an N-linked (GlcNAc...) asparagine glycan. A helical transmembrane segment spans residues 347–366 (VILGCLFGPAALYIWAVGLL). Residues 367 to 397 (AAGQSSTMTGTYAGQFVMEGFLKLRWSRFAR) lie on the Cytoplasmic side of the membrane. The chain crosses the membrane as a helical span at residues 398–415 (VLLTRSCAILPTVLVAVF). Residues 416 to 426 (RDLRDLSGLND) are Extracellular-facing. A helical membrane pass occupies residues 427 to 447 (LLNVLQSLLLPFAVLPILTFT). Residues 448–463 (SMPAVMQEFANGLVSK) are Cytoplasmic-facing. The helical transmembrane segment at 464–485 (VISSSIMVLVCAVNLYFVISYV) threads the bilayer. At 486–493 (PSLPHPDY) the chain is on the extracellular side. A helical transmembrane segment spans residues 494-513 (FSLVALLAAAYLGLTTYLVW). Residues 514 to 548 (TCLITQGATLLAHSSHQRFLYGLPEEDQENGRTSG) lie on the Cytoplasmic side of the membrane.

The protein belongs to the NRAMP family.

It is found in the late endosome membrane. The protein resides in the lysosome membrane. The enzyme catalyses Zn(2+)(in) + H(+)(out) = Zn(2+)(out) + H(+)(in). The catalysed reaction is Fe(2+)(in) + H(+)(out) = Fe(2+)(out) + H(+)(in). It catalyses the reaction Mn(2+)(in) + H(+)(out) = Mn(2+)(out) + H(+)(in). In terms of biological role, macrophage-specific antiporter that fluxes metal ions in either direction against a proton gradient. Localized to late endosomal lysosomal membranes, delivers bivalent cations from the cytosol into these acidic compartments where they may directly affect antimicrobial activity. Involved in iron metabolism and host natural resistance to infection with intracellular parasites. Pathogen resistance involves sequestration of Fe(2+) and Mn(2+), cofactors of both prokaryotic and eukaryotic catalases and superoxide dismutases, not only to protect the macrophage against its own generation of reactive oxygen species, but to deny the cations to the pathogen for synthesis of its protective enzymes. The protein is Natural resistance-associated macrophage protein 1 (SLC11A1) of Cervus elaphus (Red deer).